We begin with the raw amino-acid sequence, 682 residues long: DNA ligase (682 aa).

Residues 38 to 42 (DAEYD), 87 to 88 (SI), and Glu-119 each bind NAD(+). Lys-121 (N6-AMP-lysine intermediate) is an active-site residue. Residues Arg-142, Glu-181, Lys-298, and Lys-322 each coordinate NAD(+). Zn(2+) is bound by residues Cys-416, Cys-419, Cys-434, and Cys-439. Residues 601–682 (GHEMPLAGKT…LLSLLEPGER (82 aa)) enclose the BRCT domain.

The protein belongs to the NAD-dependent DNA ligase family. LigA subfamily. Requires Mg(2+) as cofactor. It depends on Mn(2+) as a cofactor.

It catalyses the reaction NAD(+) + (deoxyribonucleotide)n-3'-hydroxyl + 5'-phospho-(deoxyribonucleotide)m = (deoxyribonucleotide)n+m + AMP + beta-nicotinamide D-nucleotide.. In terms of biological role, DNA ligase that catalyzes the formation of phosphodiester linkages between 5'-phosphoryl and 3'-hydroxyl groups in double-stranded DNA using NAD as a coenzyme and as the energy source for the reaction. It is essential for DNA replication and repair of damaged DNA. This is DNA ligase from Desulfosudis oleivorans (strain DSM 6200 / JCM 39069 / Hxd3) (Desulfococcus oleovorans).